Reading from the N-terminus, the 170-residue chain is Superoxide dismutase [Fe] (170 aa).

Fe cation contacts are provided by H27, H81, D163, and H167.

This sequence belongs to the iron/manganese superoxide dismutase family. In terms of assembly, homodimer. Requires Fe cation as cofactor.

It catalyses the reaction 2 superoxide + 2 H(+) = H2O2 + O2. Functionally, destroys superoxide anion radicals which are normally produced within the cells and which are toxic to biological systems. The sequence is that of Superoxide dismutase [Fe] (sodA) from Raoultella planticola (Klebsiella planticola).